We begin with the raw amino-acid sequence, 214 residues long: Vascular endothelial growth factor A (214 aa).

An N-terminal signal peptide occupies residues 1–26 (MNFLLSWVHWTLALLLYLHHAKWSQA). Disulfide bonds link C51–C93, C82–C127, and C86–C129. N-linked (GlcNAc...) asparagine glycosylation is present at N100. Over residues 131 to 142 (PKKDRTKPEKKS) the composition is skewed to basic and acidic residues. A disordered region spans residues 131–159 (PKKDRTKPEKKSVRGKGKGQKRKRKKSRF). Residues 143–159 (VRGKGKGQKRKRKKSRF) are compositionally biased toward basic residues.

It belongs to the PDGF/VEGF growth factor family. Homodimer; disulfide-linked. Also found as heterodimer with PGF. Interacts with NRP1. Interacts with isoform 2 of BSG. Interacts with CD82; this interaction inhibits VEGFA-mediated signaling pathway. As to expression, expressed in the pituitary, in brain, in particularly in supraoptic and paraventricular nuclei and the choroid plexus. Also found abundantly in the corpus luteum of the ovary and in kidney glomeruli. Expressed in the ductal epithelial cells of post-pubertal mammary glands. Expressed in the ductal and alveolar epithelial cells throughout the whole period of gestational evolution, lactation and involution.

Its subcellular location is the secreted. Its function is as follows. Growth factor active in angiogenesis, vasculogenesis and endothelial cell growth. Induces endothelial cell proliferation, promotes cell migration, inhibits apoptosis and induces permeabilization of blood vessels. Binds to the FLT1/VEGFR1 and KDR/VEGFR2 receptors, heparan sulfate and heparin. May play a role in increasing vascular permeability during lactation, when increased transport of molecules from the blood is required for efficient milk protein synthesis. Binding to NRP1 receptor initiates a signaling pathway needed for motor neuron axon guidance and cell body migration, including for the caudal migration of facial motor neurons from rhombomere 4 to rhombomere 6 during embryonic development. Also binds the DEAR/FBXW7-AS1 receptor. The sequence is that of Vascular endothelial growth factor A (Vegfa) from Rattus norvegicus (Rat).